The primary structure comprises 631 residues: Phosphomethylpyrimidine synthase (631 aa).

Substrate is bound by residues Asn239, Met268, Tyr297, His333, 353–355 (SRG), 394–397 (DGLR), and Glu433. His437 is a Zn(2+) binding site. Residue Tyr460 coordinates substrate. His501 is a binding site for Zn(2+). 3 residues coordinate [4Fe-4S] cluster: Cys581, Cys584, and Cys589.

This sequence belongs to the ThiC family. In terms of assembly, homodimer. Requires [4Fe-4S] cluster as cofactor.

The catalysed reaction is 5-amino-1-(5-phospho-beta-D-ribosyl)imidazole + S-adenosyl-L-methionine = 4-amino-2-methyl-5-(phosphooxymethyl)pyrimidine + CO + 5'-deoxyadenosine + formate + L-methionine + 3 H(+). The protein operates within cofactor biosynthesis; thiamine diphosphate biosynthesis. In terms of biological role, catalyzes the synthesis of the hydroxymethylpyrimidine phosphate (HMP-P) moiety of thiamine from aminoimidazole ribotide (AIR) in a radical S-adenosyl-L-methionine (SAM)-dependent reaction. This chain is Phosphomethylpyrimidine synthase, found in Escherichia coli O45:K1 (strain S88 / ExPEC).